Here is a 20-residue protein sequence, read N- to C-terminus: Fibrinogen beta chain (20 aa).

Positions 1–20 (ATDYEDEEFPGAVPPSVGAR) are disordered. An O-linked (GalNAc...) threonine glycan is attached at threonine 2. Tyrosine 4 is modified (sulfotyrosine).

As to quaternary structure, heterohexamer; disulfide linked. Contains 2 sets of 3 non-identical chains (alpha, beta and gamma). The 2 heterotrimers are in head to head conformation with the N-termini in a small central domain. Post-translationally, conversion of fibrinogen to fibrin is triggered by thrombin, which cleaves fibrinopeptides A and B from alpha and beta chains, and thus exposes the N-terminal polymerization sites responsible for the formation of the soft clot.

The protein resides in the secreted. Cleaved by the protease thrombin to yield monomers which, together with fibrinogen alpha (FGA) and fibrinogen gamma (FGG), polymerize to form an insoluble fibrin matrix. Fibrin has a major function in hemostasis as one of the primary components of blood clots. In addition, functions during the early stages of wound repair to stabilize the lesion and guide cell migration during re-epithelialization. Was originally thought to be essential for platelet aggregation, based on in vitro studies using anticoagulated blood. However subsequent studies have shown that it is not absolutely required for thrombus formation in vivo. Enhances expression of SELP in activated platelets. Maternal fibrinogen is essential for successful pregnancy. Fibrin deposition is also associated with infection, where it protects against IFNG-mediated hemorrhage. May also facilitate the antibacterial immune response via both innate and T-cell mediated pathways. The sequence is that of Fibrinogen beta chain (FGB) from Elephas maximus (Indian elephant).